Here is a 343-residue protein sequence, read N- to C-terminus: Phosphate acyltransferase (343 aa).

Belongs to the PlsX family. In terms of assembly, homodimer. Probably interacts with PlsY.

The protein localises to the cytoplasm. It catalyses the reaction a fatty acyl-[ACP] + phosphate = an acyl phosphate + holo-[ACP]. The protein operates within lipid metabolism; phospholipid metabolism. Catalyzes the reversible formation of acyl-phosphate (acyl-PO(4)) from acyl-[acyl-carrier-protein] (acyl-ACP). This enzyme utilizes acyl-ACP as fatty acyl donor, but not acyl-CoA. This Neorickettsia sennetsu (strain ATCC VR-367 / Miyayama) (Ehrlichia sennetsu) protein is Phosphate acyltransferase.